A 613-amino-acid polypeptide reads, in one-letter code: Ribosome-associated molecular chaperone SSB1 (613 aa).

Residues 1 to 391 (MAEGVFSGAI…ILTGSNLSDD (391 aa)) are nucleotide binding domain (NBD). Residues 16 to 18 (TTY), K73, 205 to 207 (GGT), 271 to 278 (ERAKRTLS), and G342 contribute to the ATP site. The segment at 392 to 402 (TKDLLLLDVAP) is inter-domain linker. Residues 403–613 (LSLGVAMQGD…RVVTKAMATR (211 aa)) are substrate binding domain (SBD). The interval 516-612 (SEDIEKMVSQ…KRVVTKAMAT (97 aa)) is lid domain (SBDalpha). Positions 574–582 (VEAALADAF) match the Nuclear export signal motif.

This sequence belongs to the heat shock protein 70 family. Ssb-type Hsp70 subfamily. As to quaternary structure, binds to ribosomes. Binds close to the ribosomal tunnel exit via contacts with both ribosomal proteins and rRNA. Directly interacts with nascent polypeptides. This interaction is dependent on the ribosome-associated complex (RAC). Interacts with SSE1. Interacts with FES1.

It localises to the cytoplasm. The enzyme catalyses ATP + H2O = ADP + phosphate + H(+). Ribosome-bound, Hsp70-type chaperone that assists in the cotranslational folding of newly synthesized proteins in the cytosol. Stimulates folding by interacting with nascent chains, binding to short, largely hydrophobic sequences exposed by unfolded proteins, thereby stabilizing longer, more slowly translated, and aggregation-prone nascent polypeptides and domains that cannot fold stably until fully synthesized. The Hsp70-protein substrate interaction depends on ATP-binding and on allosteric regulation between the NBD and the SBD. The ATP-bound state is characterized by a fast exchange rate of substrate (low affinity state), while in the ADP-bound state exchange is much slower (high affinity state). During the Hsp70 cycle, the chaperone switches between the ATP-bound state (open conformation) and the ADP-bound state (closed conformation) by major conformational rearrangements involving mainly the lid domain. Ssb cooperates with a specific Hsp40/Hsp70 co-chaperone termed the ribosome-associated complex (RAC), which stimulates the ATPase activity of the ribosome-associated pool of Ssbs and switches it to the high affinity substrate binding state. Hsp110 chaperone SSE1 and FES1 act as nucleotide exchange factors that cause substrate release. The sequence is that of Ribosome-associated molecular chaperone SSB1 (SSB1) from Eremothecium gossypii (strain ATCC 10895 / CBS 109.51 / FGSC 9923 / NRRL Y-1056) (Yeast).